A 1400-amino-acid polypeptide reads, in one-letter code: Macrophage-stimulating protein receptor (1400 aa).

An N-terminal signal peptide occupies residues 1–24 (MELLPPLPQSFLLLLLLPAKPAAG). Residues 25 to 957 (EDWQCPRTPY…PGPDGVPQST (933 aa)) lie on the Extracellular side of the membrane. In terms of domain architecture, Sema spans 31–522 (RTPYAASRDF…SGDQVFQVPI (492 aa)). N66 is a glycosylation site (N-linked (GlcNAc...) asparagine). 7 disulfides stabilise this stretch: C101-C104, C107-C162, C135-C143, C174-C177, C300-C367, C385-C407, and C386-C422. N-linked (GlcNAc...) asparagine glycosylation is found at N419, N458, and N488. Intrachain disulfides connect C527-C545, C533-C567, C536-C552, and C548-C558. IPT/TIG domains lie at 569–671 (PKLT…FRVD), 684–767 (PVLI…FQYR), and 770–860 (PVVL…FRFL). Residues N654, N720, N841, and N897 are each glycosylated (N-linked (GlcNAc...) asparagine). Residues 958-978 (LLGILLPLLLLVAALATALVF) form a helical membrane-spanning segment. The Cytoplasmic segment spans residues 979–1400 (SYWWRRKQLV…RPLSEPPRPT (422 aa)). In terms of domain architecture, Protein kinase spans 1082–1345 (THSDRVIGKG…VLVGEVEQIV (264 aa)). Residues 1088-1096 (IGKGHFGVV), K1114, and 1161-1164 (LPYM) each bind ATP. D1208 serves as the catalytic Proton acceptor. R1212 contributes to the ATP binding site. 4 positions are modified to phosphotyrosine; by autocatalysis: Y1238, Y1239, Y1353, and Y1360. A disordered region spans residues 1367–1400 (TSHEMNVRPEQPQFSPMPGNVRRPRPLSEPPRPT).

Belongs to the protein kinase superfamily. Tyr protein kinase family. As to quaternary structure, heterodimer of an alpha chain and a beta chain which are disulfide linked. Binds PLXNB1. Associates with and is negatively regulated by HYAL2. Interacts when phosphorylated with downstream effectors including PIK3R1, PCLG1, GRB2 and GAB1. Interacts with integrin beta1/ITGB1 in a ligand-independent fashion. Post-translationally, proteolytic processing yields the two subunits. Autophosphorylated in response to ligand binding on Tyr-1238 and Tyr-1239 in the kinase domain leading to further phosphorylation of Tyr-1353 and Tyr-1360 in the C-terminal multifunctional docking site. In terms of processing, ubiquitinated. Ubiquitination by CBL regulates the receptor stability and activity through proteasomal degradation. Post-translationally, O-mannosylation of IPT/TIG domains on Thr or Ser residues by TMEM260 is required for protein maturation. O-mannosylated residues are composed of single mannose glycans that are not elongated or modified. In terms of tissue distribution, expressed in colon, skin, lung and bone marrow.

It is found in the membrane. The enzyme catalyses L-tyrosyl-[protein] + ATP = O-phospho-L-tyrosyl-[protein] + ADP + H(+). Its activity is regulated as follows. In its inactive state, the C-terminal tail interacts with the catalytic domain and inhibits the kinase activity. Upon ligand binding, the C-terminal tail is displaced and becomes phosphorylated, thus increasing the kinase activity. Receptor tyrosine kinase that transduces signals from the extracellular matrix into the cytoplasm by binding to MST1 ligand. Regulates many physiological processes including cell survival, migration and differentiation. Ligand binding at the cell surface induces autophosphorylation of RON on its intracellular domain that provides docking sites for downstream signaling molecules. Following activation by ligand, interacts with the PI3-kinase subunit PIK3R1, PLCG1 or the adapter GAB1. Recruitment of these downstream effectors by RON leads to the activation of several signaling cascades including the RAS-ERK, PI3 kinase-AKT, or PLCgamma-PKC. RON signaling activates the wound healing response by promoting epithelial cell migration, proliferation as well as survival at the wound site. Also plays a role in the innate immune response by regulating the migration and phagocytic activity of macrophages. Alternatively, RON can also promote signals such as cell migration and proliferation in response to growth factors other than MST1 ligand. In Homo sapiens (Human), this protein is Macrophage-stimulating protein receptor (MST1R).